We begin with the raw amino-acid sequence, 180 residues long: Large ribosomal subunit protein uL6 (180 aa).

Belongs to the universal ribosomal protein uL6 family. As to quaternary structure, part of the 50S ribosomal subunit.

This protein binds to the 23S rRNA, and is important in its secondary structure. It is located near the subunit interface in the base of the L7/L12 stalk, and near the tRNA binding site of the peptidyltransferase center. In Cutibacterium acnes (strain DSM 16379 / KPA171202) (Propionibacterium acnes), this protein is Large ribosomal subunit protein uL6.